We begin with the raw amino-acid sequence, 657 residues long: Putative GreA-associated domains protein (657 aa).

One can recognise a GRAD2 domain in the interval 1–152 (MDTRDLTAYS…EQEGNKEKAT (152 aa)). Positions 153 to 657 (EFYKKALYRF…TAGSFGTLWE (505 aa)) constitute a GRAD1 domain.

This chain is Putative GreA-associated domains protein, found in Treponema pallidum (strain Nichols).